The following is a 444-amino-acid chain: Sperm-associated antigen 4 protein (444 aa).

Residues 1-109 (MRRNPRPGSA…GGASEPSGSP (109 aa)) form a disordered region. A compositionally biased stretch (low complexity) spans 19–36 (NFYSENSNSSHSATSGDS). The next 2 membrane-spanning stretches (helical) occupy residues 137 to 159 (FLSL…LVCV) and 166 to 188 (IRFL…WGLL). A coiled-coil region spans residues 204–241 (LSQYHHRVHSQGQQLQQLQAELSKLHKEVTSVRAAHSE). One can recognise an SUN domain in the interval 267 to 428 (GASIDLEKTS…YRVRAHGVRI (162 aa)).

Self-associates. Interacts with ODF1. May associate with microtubules. Interacts with SUN3 and SYNE1; suggesting the formation of a LINC complexs; a SUN domain-based heterotrimer of SPAG4 and SUN3 may associate with SYNE1. Interacts with SEPT12 and LMNB1; during spermatogenesis. Testis specific. Exclusively expressed in spermatids.

The protein localises to the membrane. It localises to the cytoplasm. It is found in the cytoskeleton. Its subcellular location is the flagellum axoneme. The protein resides in the nucleus envelope. The protein localises to the nucleus inner membrane. In terms of biological role, involved in spermatogenesis. Required for sperm head formation but not required to establish and maintain general polarity of the sperm head. Required for anchoring and organization of the manchette. Required for targeting of SUN3 and probably SYNE1 through a probable SUN1:SYNE3 LINC complex to the nuclear envelope and involved in accurate posterior sperm head localization of the complex. May anchor SUN3 the nuclear envelope. Involved in maintenance of the nuclear envelope integrity. May assist the organization and assembly of outer dense fibers (ODFs), a specific structure of the sperm tail. The polypeptide is Sperm-associated antigen 4 protein (Spag4) (Rattus norvegicus (Rat)).